A 310-amino-acid chain; its full sequence is Tryptophan 2,3-dioxygenase (310 aa).

Residues 1–39 (MQPPGNDAPAGCPFSGARAQGTQAAHEAPHVPGDAGEQA) form a disordered region. Residues 79-83 (FIIQH), tyrosine 141, and arginine 145 contribute to the substrate site. A heme-binding site is contributed by histidine 268. Residue threonine 282 participates in substrate binding.

This sequence belongs to the tryptophan 2,3-dioxygenase family. In terms of assembly, homotetramer. Requires heme as cofactor.

The enzyme catalyses L-tryptophan + O2 = N-formyl-L-kynurenine. The protein operates within amino-acid degradation; L-tryptophan degradation via kynurenine pathway; L-kynurenine from L-tryptophan: step 1/2. In terms of biological role, heme-dependent dioxygenase that catalyzes the oxidative cleavage of the L-tryptophan (L-Trp) pyrrole ring and converts L-tryptophan to N-formyl-L-kynurenine. Catalyzes the oxidative cleavage of the indole moiety. The protein is Tryptophan 2,3-dioxygenase of Burkholderia multivorans (strain ATCC 17616 / 249).